The chain runs to 123 residues: Small ribosomal subunit protein uS12 (123 aa).

Aspartate 89 carries the 3-methylthioaspartic acid modification. Residues 101–123 form a disordered region; it reads TLDTQGVKDRRQRRSKYGAKRPK. The span at 110–123 shows a compositional bias: basic residues; it reads RRQRRSKYGAKRPK.

The protein belongs to the universal ribosomal protein uS12 family. As to quaternary structure, part of the 30S ribosomal subunit. Contacts proteins S8 and S17. May interact with IF1 in the 30S initiation complex.

In terms of biological role, with S4 and S5 plays an important role in translational accuracy. Interacts with and stabilizes bases of the 16S rRNA that are involved in tRNA selection in the A site and with the mRNA backbone. Located at the interface of the 30S and 50S subunits, it traverses the body of the 30S subunit contacting proteins on the other side and probably holding the rRNA structure together. The combined cluster of proteins S8, S12 and S17 appears to hold together the shoulder and platform of the 30S subunit. This is Small ribosomal subunit protein uS12 from Paramagnetospirillum magneticum (strain ATCC 700264 / AMB-1) (Magnetospirillum magneticum).